Reading from the N-terminus, the 107-residue chain is Putative double-stranded DNA mimic protein Spro_2690 (107 aa).

The protein belongs to the putative dsDNA mimic protein family.

In terms of biological role, may act as a double-stranded DNA (dsDNA) mimic. Probably regulates the activity of a dsDNA-binding protein. The protein is Putative double-stranded DNA mimic protein Spro_2690 of Serratia proteamaculans (strain 568).